The following is a 76-amino-acid chain: cAMP-dependent protein kinase inhibitor alpha (76 aa).

T2 is subject to N-acetylthreonine. A disordered region spans residues 49 to 76 (KTEGEEDAQRNSTEQSGEAQGEAAKSES).

Belongs to the PKI family.

Functionally, extremely potent competitive inhibitor of cAMP-dependent protein kinase activity, this protein interacts with the catalytic subunit of the enzyme after the cAMP-induced dissociation of its regulatory chains. The chain is cAMP-dependent protein kinase inhibitor alpha (PKIA) from Bos taurus (Bovine).